The primary structure comprises 793 residues: Toll-like receptor 6 (793 aa).

An N-terminal signal peptide occupies residues 1–23 (MIKDKESPIRSCHFVYIVALVFG). The Extracellular portion of the chain corresponds to 24–584 (TIIQFSDESE…FQVSELSCNT (561 aa)). 19 LRR repeats span residues 54–77 (TKVL…FLSG), 78–101 (LRVL…FNHD), 102–122 (LEYL…PITT), 123–147 (TLKH…GNLT), 148–168 (QLNF…LPIA), 169–196 (HLHL…ILNT), 197–219 (KKLH…SANS), 220–250 (LGCL…GGPT), 251–277 (LLNF…WPKP), 278–303 (IEYL…YKTT), 304–330 (LKAL…VFSE), 331–354 (MNIL…EPST), 355–378 (FKFL…TLAR), 379–404 (LETL…DMLS), 405–428 (LETL…SWVG), 429–449 (SIVV…RCLP), 450–473 (PRIK…TGLE), 474–495 (TLQE…GIFS), and 496–519 (SLSI…QSCQ). Residue N63 is glycosylated (N-linked (GlcNAc...) asparagine). The cysteines at positions 117 and 140 are disulfide-linked. The N-linked (GlcNAc...) asparagine glycan is linked to N145. An intrachain disulfide couples C235 to C265. N253 and N285 each carry an N-linked (GlcNAc...) asparagine glycan. A disulfide bridge connects residues C348 and C373. The N-linked (GlcNAc...) asparagine glycan is linked to N359. N-linked (GlcNAc...) asparagine glycosylation is found at N423 and N434. A disulfide bridge links C424 with C447. One can recognise an LRRCT domain in the interval 520-575 (KIRSLKAGNNPFQCSCELRDFIQSVGQVSSDVVEGWPESYKCDYPESYKGTPLKDF). Residues 585–605 (ALLIITIVVPGLVLAVAVTVL) form a helical membrane-spanning segment. At 606–793 (CIYLDLPWYL…KLMEKAAEIH (188 aa)) the chain is on the cytoplasmic side. Positions 640 to 781 (LQFHAFISYS…LFWANLRASI (142 aa)) constitute a TIR domain.

It belongs to the Toll-like receptor family. Homodimer (via cytoplasmic TIR domain). Heterodimer with TLR2 via their respective extracellular domains. Binds MYD88 via their respective TIR domains. Interacts with CD36, following CD36 stimulation by oxLDL or amyloid-beta 42, and forms a heterodimer with TLR4. The trimeric complex is internalized and triggers inflammatory response. LYN kinase activity facilitates TLR4-TLR6 heterodimerization and signal initiation. The heterodimer TLR2:TLR6 interacts with CD14 and CD36 in response to triacylated lipopeptides. As to expression, highest expression levels seen in blood and lymph node, intermediate expression seen in spleen and lowest expression seen in the liver, lung and udder cistern.

The protein resides in the cell membrane. Its subcellular location is the cytoplasmic vesicle. It is found in the phagosome membrane. It localises to the membrane raft. The protein localises to the golgi apparatus. Functionally, participates in the innate immune response to Gram-positive bacteria and fungi. Specifically recognizes diacylated and, to a lesser extent, triacylated lipopeptides. In response to diacylated lipopeptides, forms the activation cluster TLR2:TLR6:CD14:CD36, this cluster triggers signaling from the cell surface and subsequently is targeted to the Golgi in a lipid-raft dependent pathway. Acts via MYD88 and TRAF6, leading to NF-kappa-B activation, cytokine secretion and the inflammatory response. Recognizes mycoplasmal macrophage-activating lipopeptide-2kD (MALP-2), soluble tuberculosis factor (STF), phenol-soluble modulin (PSM) and B.burgdorferi outer surface protein A lipoprotein (OspA-L) cooperatively with TLR2. In complex with TLR4, promotes sterile inflammation in monocytes/macrophages in response to oxidized low-density lipoprotein (oxLDL) or amyloid-beta 42. In this context, the initial signal is provided by oxLDL- or amyloid-beta 42-binding to CD36. This event induces the formation of a heterodimer of TLR4 and TLR6, which is rapidly internalized and triggers inflammatory response, leading to the NF-kappa-B-dependent production of CXCL1, CXCL2 and CCL9 cytokines, via MYD88 signaling pathway, and CCL5 cytokine, via TICAM1 signaling pathway, as well as IL1B secretion. In Bos taurus (Bovine), this protein is Toll-like receptor 6.